The sequence spans 250 residues: Isoprenyl transferase (250 aa).

Asp27 is a catalytic residue. Asp27 is a Mg(2+) binding site. Substrate contacts are provided by residues 28–31 (GNRR), Trp32, His48, and 76–78 (STE). Catalysis depends on Asn79, which acts as the Proton acceptor. Substrate contacts are provided by residues Phe80, Arg82, Arg199, and 205 to 207 (RVS). A Mg(2+)-binding site is contributed by Glu218.

Belongs to the UPP synthase family. As to quaternary structure, homodimer. The cofactor is Mg(2+).

Catalyzes the condensation of isopentenyl diphosphate (IPP) with allylic pyrophosphates generating different type of terpenoids. The polypeptide is Isoprenyl transferase (Chlamydia abortus (strain DSM 27085 / S26/3) (Chlamydophila abortus)).